The following is a 122-amino-acid chain: Large ribosomal subunit protein uL14c (122 aa).

It belongs to the universal ribosomal protein uL14 family. Part of the 50S ribosomal subunit.

The protein resides in the plastid. It localises to the chloroplast. Its function is as follows. Binds to 23S rRNA. The polypeptide is Large ribosomal subunit protein uL14c (Lotus japonicus (Lotus corniculatus var. japonicus)).